Consider the following 876-residue polypeptide: Paramyosin (876 aa).

The tract at residues 1–28 (MSARSAKFMYRSGNAGASGDLSVEYGTD) is nonhelical region. Positions 29-855 (LGALTRLEDK…IRAKHRSWVT (827 aa)) form a coiled coil. Positions 856 to 876 (TSQVPGGTRQVFVTQEEQSNY) are nonhelical region.

It belongs to the paramyosin family. In terms of assembly, homodimer.

Its subcellular location is the cytoplasm. The protein resides in the myofibril. In terms of biological role, paramyosin is a major structural component of many thick filaments isolated from invertebrate muscles. The sequence is that of Paramyosin from Sarcoptes scabiei (Itch mite).